The primary structure comprises 573 residues: Arylsulfatase I (573 aa).

The N-terminal stretch at 1-23 is a signal peptide; sequence MHALSGFSLVSLLSLGYLSWDWA. Positions 55, 56, and 93 each coordinate Ca(2+). Residue Cys-93 is the Nucleophile of the active site. Cys-93 is modified (3-oxoalanine (Cys)). Lys-147 serves as a coordination point for substrate. The active site involves His-149. Substrate is bound at residue His-239. Residues Asn-276 and Asn-288 are each glycosylated (N-linked (GlcNAc...) asparagine). Positions 297 and 298 each coordinate Ca(2+). Lys-315 is a substrate binding site. 2 N-linked (GlcNAc...) asparagine glycosylation sites follow: Asn-466 and Asn-496. Positions 506-550 are disordered; sequence AANPRAHPDFNGGAWGPWASDEDEEEEDEEEEGRARSFPRGRRKK. Residues 525-537 are compositionally biased toward acidic residues; it reads SDEDEEEEDEEEE.

Belongs to the sulfatase family. Ca(2+) serves as cofactor. Post-translationally, the oxidation of Cys-93 residue to 3-oxoalanine (also known as C(alpha)-formylglycine) by SUMF1/Sulfatase-modifying factor 1, seems critical for catalytic activity.

The protein resides in the secreted. Its subcellular location is the endoplasmic reticulum. Functionally, displays arylsulfatase activity at neutral pH, when co-expressed with SUMF1; arylsulfatase activity is measured in the secretion medium of retinal cell line, but no activity is recorded when measured in cell extracts. This Rattus norvegicus (Rat) protein is Arylsulfatase I (Arsi).